We begin with the raw amino-acid sequence, 547 residues long: Immunoglobulin epsilon heavy chain (547 aa).

Q1 is modified (pyrrolidone carboxylic acid). 5 consecutive Ig-like domains span residues 1–120 (QVQL…TEVT), 130–223 (PSVF…KTFS), 232–329 (PTVK…KKCA), 333–437 (PRGV…TKTS), and 443–542 (PEVY…RAVS). Positions 1–124 (QVQLVQSGAE…EGTEVTYTVS (124 aa)) are variable (V) domain, involved in antigen recognition. 6 disulfide bridges follow: C22–C96, C139–C225, C153–C207, C254–C312, C358–C418, and C464–C524. The interval 125 to 547 (GAWTLPSVFP…QRAVSVNPGK (423 aa)) is constant (C) domain. Residues N145, N173, N219, N265, N371, N383, and N394 are each glycosylated (N-linked (GlcNAc...) asparagine).

In terms of assembly, immunoglobulins are composed of two identical heavy chains and two identical light chains; disulfide-linked.

It localises to the secreted. It is found in the cell membrane. Immunoglobulins, also known as antibodies, are membrane-bound or secreted glycoproteins produced by B lymphocytes. In the recognition phase of humoral immunity, the membrane-bound immunoglobulins serve as receptors which, upon binding of a specific antigen, trigger the clonal expansion and differentiation of B lymphocytes into immunoglobulins-secreting plasma cells. Secreted immunoglobulins mediate the effector phase of humoral immunity, which results in the elimination of bound antigens. The antigen binding site is formed by the variable domain of one heavy chain, together with that of its associated light chain. Thus, each immunoglobulin has two antigen binding sites with remarkable affinity for a particular antigen. The variable domains are assembled by a process called V-(D)-J rearrangement and can then be subjected to somatic hypermutations which, after exposure to antigen and selection, allow affinity maturation for a particular antigen. The polypeptide is Immunoglobulin epsilon heavy chain (Homo sapiens (Human)).